Reading from the N-terminus, the 504-residue chain is ATP synthase subunit alpha, chloroplastic (504 aa).

170–177 (GDRQTGKT) contributes to the ATP binding site.

This sequence belongs to the ATPase alpha/beta chains family. As to quaternary structure, F-type ATPases have 2 components, CF(1) - the catalytic core - and CF(0) - the membrane proton channel. CF(1) has five subunits: alpha(3), beta(3), gamma(1), delta(1), epsilon(1). CF(0) has four main subunits: a, b, b' and c.

It localises to the plastid. The protein resides in the chloroplast thylakoid membrane. The catalysed reaction is ATP + H2O + 4 H(+)(in) = ADP + phosphate + 5 H(+)(out). Produces ATP from ADP in the presence of a proton gradient across the membrane. The alpha chain is a regulatory subunit. This is ATP synthase subunit alpha, chloroplastic from Jasminum nudiflorum (Winter jasmine).